Reading from the N-terminus, the 670-residue chain is DNA mismatch repair protein MutL (670 aa).

The segment at 363–451 is disordered; the sequence is SFDRGRPLSR…RAAGGPASTH (89 aa). The span at 379-389 shows a compositional bias: basic and acidic residues; the sequence is ERWRERHRPDA.

The protein belongs to the DNA mismatch repair MutL/HexB family.

In terms of biological role, this protein is involved in the repair of mismatches in DNA. It is required for dam-dependent methyl-directed DNA mismatch repair. May act as a 'molecular matchmaker', a protein that promotes the formation of a stable complex between two or more DNA-binding proteins in an ATP-dependent manner without itself being part of a final effector complex. This Syntrophobacter fumaroxidans (strain DSM 10017 / MPOB) protein is DNA mismatch repair protein MutL.